The chain runs to 83 residues: Large ribosomal subunit protein bL31B (83 aa).

The protein belongs to the bacterial ribosomal protein bL31 family. Type B subfamily. In terms of assembly, part of the 50S ribosomal subunit.

The polypeptide is Large ribosomal subunit protein bL31B (Lactobacillus gasseri (strain ATCC 33323 / DSM 20243 / BCRC 14619 / CIP 102991 / JCM 1131 / KCTC 3163 / NCIMB 11718 / NCTC 13722 / AM63)).